A 1226-amino-acid chain; its full sequence is Methionine synthase (1226 aa).

The 321-residue stretch at 6-326 (RAQIEAQLKQ…EHIRHMAMAV (321 aa)) folds into the Hcy-binding domain. The Zn(2+) site is built by Cys-248, Cys-311, and Cys-312. The Pterin-binding domain maps to 357–618 (FVNVGERTNV…VPEKLREAVE (262 aa)). The B12-binding N-terminal domain occupies 651–745 (SALEWRTWSV…FINASKQAGS (95 aa)). Residues Glu-695, 757 to 761 (GDVHD), His-760, Ser-805, Thr-809, and Ala-861 contribute to the methylcob(III)alamin site. In terms of domain architecture, B12-binding spans 747 to 882 (NGKILLATVK…SDELRPAFVE (136 aa)). The region spanning 898 to 1226 (KKPRTKPVTL…EKWLGPNING (329 aa)) is the AdoMet activation domain. S-adenosyl-L-methionine contacts are provided by residues Asp-948, Arg-1136, and 1191–1192 (YF).

This sequence belongs to the vitamin-B12 dependent methionine synthase family. Methylcob(III)alamin is required as a cofactor. The cofactor is Zn(2+).

The catalysed reaction is (6S)-5-methyl-5,6,7,8-tetrahydrofolate + L-homocysteine = (6S)-5,6,7,8-tetrahydrofolate + L-methionine. The protein operates within amino-acid biosynthesis; L-methionine biosynthesis via de novo pathway; L-methionine from L-homocysteine (MetH route): step 1/1. Catalyzes the transfer of a methyl group from methyl-cobalamin to homocysteine, yielding enzyme-bound cob(I)alamin and methionine. Subsequently, remethylates the cofactor using methyltetrahydrofolate. In Vibrio vulnificus (strain CMCP6), this protein is Methionine synthase (metH).